A 338-amino-acid chain; its full sequence is MRILGIETSCDETGVAIYDDEKGLLAHQLYSQVKLHADYGGVVPELASRDHVKKTIPLIKAALNDAGLTKDDIDGIAYTAGPGLVGALLVGSTIGRSIAYAWDVPAIPVHHMEGHLLAPMLEDEPPAFPFVALLVSGGHTMMVEVKGIGEYQILGESVDDAAGEAFDKTAKLMGLDYPGGPLLSKLAESGTKGRFKFPRPMTDRPGLDFSFSGLKTFAANTIRGNEDDLQTRADIAFAFQEAVVDTLAIKCRRALKQTGMKRLVMAGGVSANKYLRQELEVMMKKIGGEVYYPRTEFCTDNGAMIAYAGMQRLKNGETTDLAVQAKPRWPIDQLAPIK.

Fe cation contacts are provided by His111 and His115. Residues 134-138 (LVSGG), Asp167, Gly180, and Asn272 each bind substrate. Asp300 lines the Fe cation pocket.

Belongs to the KAE1 / TsaD family. It depends on Fe(2+) as a cofactor.

Its subcellular location is the cytoplasm. It carries out the reaction L-threonylcarbamoyladenylate + adenosine(37) in tRNA = N(6)-L-threonylcarbamoyladenosine(37) in tRNA + AMP + H(+). Its function is as follows. Required for the formation of a threonylcarbamoyl group on adenosine at position 37 (t(6)A37) in tRNAs that read codons beginning with adenine. Is involved in the transfer of the threonylcarbamoyl moiety of threonylcarbamoyl-AMP (TC-AMP) to the N6 group of A37, together with TsaE and TsaB. TsaD likely plays a direct catalytic role in this reaction. The chain is tRNA N6-adenosine threonylcarbamoyltransferase from Aliivibrio fischeri (strain MJ11) (Vibrio fischeri).